The sequence spans 196 residues: NAD(P)H-quinone oxidoreductase subunit I (196 aa).

4Fe-4S ferredoxin-type domains lie at 55–84 (GRIH…VDWE) and 95–124 (KHYS…MTEE). [4Fe-4S] cluster is bound by residues Cys64, Cys67, Cys70, Cys74, Cys104, Cys107, Cys110, and Cys114. The tract at residues 170-196 (SPHDLPEGSQRSGKRPEEIIEEAEASS) is disordered.

This sequence belongs to the complex I 23 kDa subunit family. NDH-1 is composed of at least 11 different subunits. [4Fe-4S] cluster serves as cofactor.

Its subcellular location is the cellular thylakoid membrane. The catalysed reaction is a plastoquinone + NADH + (n+1) H(+)(in) = a plastoquinol + NAD(+) + n H(+)(out). It catalyses the reaction a plastoquinone + NADPH + (n+1) H(+)(in) = a plastoquinol + NADP(+) + n H(+)(out). In terms of biological role, NDH-1 shuttles electrons from an unknown electron donor, via FMN and iron-sulfur (Fe-S) centers, to quinones in the respiratory and/or the photosynthetic chain. The immediate electron acceptor for the enzyme in this species is believed to be plastoquinone. Couples the redox reaction to proton translocation, and thus conserves the redox energy in a proton gradient. This Crocosphaera subtropica (strain ATCC 51142 / BH68) (Cyanothece sp. (strain ATCC 51142)) protein is NAD(P)H-quinone oxidoreductase subunit I.